We begin with the raw amino-acid sequence, 161 residues long: Phosphopantetheine adenylyltransferase (161 aa).

Ser11 contributes to the substrate binding site. Residues 11 to 12 (SF) and His19 each bind ATP. Substrate is bound by residues Lys43, Leu75, and Arg89. ATP contacts are provided by residues 90 to 92 (GLR), Glu100, and 125 to 131 (YSYLSSS).

This sequence belongs to the bacterial CoaD family. In terms of assembly, homohexamer. Requires Mg(2+) as cofactor.

Its subcellular location is the cytoplasm. The catalysed reaction is (R)-4'-phosphopantetheine + ATP + H(+) = 3'-dephospho-CoA + diphosphate. It participates in cofactor biosynthesis; coenzyme A biosynthesis; CoA from (R)-pantothenate: step 4/5. Functionally, reversibly transfers an adenylyl group from ATP to 4'-phosphopantetheine, yielding dephospho-CoA (dPCoA) and pyrophosphate. This Citrifermentans bemidjiense (strain ATCC BAA-1014 / DSM 16622 / JCM 12645 / Bem) (Geobacter bemidjiensis) protein is Phosphopantetheine adenylyltransferase.